The following is a 368-amino-acid chain: Phospho-N-acetylmuramoyl-pentapeptide-transferase (368 aa).

A run of 10 helical transmembrane segments spans residues Thr-32–Asp-52, Thr-79–Ala-99, Leu-102–Tyr-122, Leu-142–Gly-160, Val-176–Gly-196, Gly-207–Ala-227, Ala-244–Phe-264, Ile-271–Ala-291, Ile-296–Val-316, and Gln-345–Leu-365.

It belongs to the glycosyltransferase 4 family. MraY subfamily. Mg(2+) serves as cofactor.

The protein resides in the cell inner membrane. The enzyme catalyses UDP-N-acetyl-alpha-D-muramoyl-L-alanyl-gamma-D-glutamyl-meso-2,6-diaminopimeloyl-D-alanyl-D-alanine + di-trans,octa-cis-undecaprenyl phosphate = di-trans,octa-cis-undecaprenyl diphospho-N-acetyl-alpha-D-muramoyl-L-alanyl-D-glutamyl-meso-2,6-diaminopimeloyl-D-alanyl-D-alanine + UMP. It participates in cell wall biogenesis; peptidoglycan biosynthesis. Catalyzes the initial step of the lipid cycle reactions in the biosynthesis of the cell wall peptidoglycan: transfers peptidoglycan precursor phospho-MurNAc-pentapeptide from UDP-MurNAc-pentapeptide onto the lipid carrier undecaprenyl phosphate, yielding undecaprenyl-pyrophosphoryl-MurNAc-pentapeptide, known as lipid I. This Nitrobacter winogradskyi (strain ATCC 25391 / DSM 10237 / CIP 104748 / NCIMB 11846 / Nb-255) protein is Phospho-N-acetylmuramoyl-pentapeptide-transferase.